The following is a 318-amino-acid chain: MFLMNMLCLIIPILLAMAFLTLVERKILGYMQLRKGPNIVGPYGLLQPIADAIKLFIKEPLRPLTSSKLMFTLAPMLAFSLALSMWIPMPMPHPLIHLNLGVLFILALSSLAVYSILWSGWASNSKYALIGALRAVAQTISYEVTLAIILLSTMMMNGSFTLSTLTTTQEHMWLIFPLWPLAMMWFISTLAETNRAPFDLTEGESELVSGFNVEYAAGPFALFFMAEYTNIIMMKALTTTLFLGALHNPLLPELFTANFVTKTLALTMAFLWIRASYPRFRYDQLMHLLWKSFLPLTLALCMLHVSLPTVSAGIPPHM.

9 helical membrane-spanning segments follow: residues 2–22 (FLMN…FLTL), 37–57 (PNIV…KLFI), 69–89 (LMFT…WIPM), 100–120 (LGVL…LWSG), 136–156 (VAQT…TMMM), 171–191 (HMWL…STLA), 206–226 (ELVS…FFMA), 253–273 (ELFT…FLWI), and 294–314 (LPLT…SAGI).

Belongs to the complex I subunit 1 family.

Its subcellular location is the mitochondrion inner membrane. The catalysed reaction is a ubiquinone + NADH + 5 H(+)(in) = a ubiquinol + NAD(+) + 4 H(+)(out). Its function is as follows. Core subunit of the mitochondrial membrane respiratory chain NADH dehydrogenase (Complex I) that is believed to belong to the minimal assembly required for catalysis. Complex I functions in the transfer of electrons from NADH to the respiratory chain. The immediate electron acceptor for the enzyme is believed to be ubiquinone. The chain is NADH-ubiquinone oxidoreductase chain 1 (MT-ND1) from Tolypeutes matacus (Southern three-banded armadillo).